Here is a 381-residue protein sequence, read N- to C-terminus: MSLNMFWFLPTHGDGHYLGTEEGSRPVDHGYLQQIAQAADRLGYTGVLIPTGRSCEDAWLVAASMIPVTQRLKFLVALRPSVTSPTVAARQAATLDRLSNGRALFNLVTGSDPQELAGDGVFLDHSERYEASAEFTQVWRRLLLGETVDFNGKHIHVRGAKLLFPPIQQPYPPLYFGGSSDVAQELAAEQVDLYLTWGEPPELVKEKIEHVRAKAAAHGRKIRFGVRLHVIVRETNDEAWQAAERLISRLDDETIAKAQAAFARTDSVGQQRMAALHNGKRDNLEISPNLWAGVGLVRGGAGTALVGDGPTVAARINEYAALGIDSFVLSGYPHLEEAYRVGELLFPHLDVAIPEIPQPQPLNPQGEAVANDFIPRNVAQS.

This sequence belongs to the SsuD family. In terms of assembly, homotetramer.

It carries out the reaction an alkanesulfonate + FMNH2 + O2 = an aldehyde + FMN + sulfite + H2O + 2 H(+). Functionally, catalyzes the desulfonation of aliphatic sulfonates. The protein is Alkanesulfonate monooxygenase of Escherichia coli O1:K1 / APEC.